We begin with the raw amino-acid sequence, 330 residues long: Adenylate isopentenyltransferase 5, chloroplastic (330 aa).

A chloroplast-targeting transit peptide spans 1 to 39; it reads MKPCMTALRQVIQPLSLNFQGNMVDVPFFRRKDKVVFVM. 40 to 47 contributes to the ATP binding site; the sequence is GATGTGKS.

Belongs to the IPP transferase family. In terms of tissue distribution, expressed in root primordia, columella root caps, upper part of young inflorescences, and fruit abscission zones.

It localises to the plastid. It is found in the chloroplast. It catalyses the reaction dimethylallyl diphosphate + ADP = N(6)-(dimethylallyl)adenosine 5'-diphosphate + diphosphate. The catalysed reaction is dimethylallyl diphosphate + ATP = N(6)-(dimethylallyl)adenosine 5'-triphosphate + diphosphate. Functionally, involved in cytokinin biosynthesis. Catalyzes the transfer of an isopentenyl group from dimethylallyl diphosphate (DMAPP) to ATP and ADP. This Arabidopsis thaliana (Mouse-ear cress) protein is Adenylate isopentenyltransferase 5, chloroplastic (IPT5).